We begin with the raw amino-acid sequence, 1017 residues long: EMILIN-1 (1017 aa).

The signal sequence occupies residues 1 to 21; sequence MAPRALWSCYLCCLLTIATEA. The region spanning 56–133 is the EMI domain; it reads HRNWCAYVVT…QGYGGDDCGE (78 aa). Intrachain disulfides connect Cys60-Cys123, Cys87-Cys94, and Cys122-Cys131. Disordered stretches follow at residues 134–180 and 259–289; these read GPAS…SEKV and ELGH…GPSE. A compositionally biased stretch (low complexity) spans 154–167; that stretch reads RPNLSGSSAGSHLS. The N-linked (GlcNAc...) asparagine glycan is linked to Asn156. Coiled coils occupy residues 171–211, 237–266, and 310–374; these read GEGP…LAED, ETLS…LNNH, and LDGF…DVVT. Residues 383–403 are disordered; sequence RRGSELGGAAGQGGHPPGYTS. Positions 387 to 398 are enriched in gly residues; that stretch reads ELGGAAGQGGHP. Asn416, Asn456, Asn562, and Asn659 each carry an N-linked (GlcNAc...) asparagine glycan. Residues 519–573 are a coiled coil; sequence LHEAEAAGEAQQAVLEGLQGLLSRLRERMDAQEETAAEILLRLNLTAAQLSQLEG. Residues 676-697 adopt a coiled-coil conformation; the sequence is LADLGATKDSIISEINRLQQEA. N-linked (GlcNAc...) asparagine glycosylation is found at Asn767 and Asn795. Positions 789-809 form a coiled coil; the sequence is RRLGALNNSLLLLEDRLQQLS. Residues 811–820 are compositionally biased toward low complexity; that stretch reads KDFTGPSGKA. The segment at 811-866 is disordered; sequence KDFTGPSGKAGPPGPPGLQGPSGPAGPPGPPGKDGQQGAIGPPGPQGEQGAEGAPA. A Collagen-like domain is found at 815-865; the sequence is GPSGKAGPPGPPGLQGPSGPAGPPGPPGKDGQQGAIGPPGPQGEQGAEGAP. Over residues 822-841 the composition is skewed to pro residues; sequence PPGPPGLQGPSGPAGPPGPP. Low complexity predominate over residues 843-866; that stretch reads KDGQQGAIGPPGPQGEQGAEGAPA. The C1q domain maps to 867–1014; the sequence is APVPRVAFSA…GALLYEDTEL (148 aa).

In terms of assembly, homotrimer associated through a moderately stable interaction of the C-terminal globular C1q domains, allowing the nucleation of the triple helix and then a further quaternary assembly to higher-order polymers via intermolecular disulfide bonds. Interacts with EMILIN2. Interacts with EFEMP2; this interaction promotes the incorporation of EFEMP2 into the extracellular matrix.

It is found in the secreted. The protein resides in the extracellular space. It localises to the extracellular matrix. Functionally, involved in elastic and collagen fibers formation. It is required for EFEMP2 deposition into the extracellular matrix, and collagen network assembly and cross-linking via protein-lysine 6-oxidase/LOX activity. May be responsible for anchoring smooth muscle cells to elastic fibers, and may be involved the processes that regulate vessel assembly. Has cell adhesive capacity. May have a function in placenta formation and initial organogenesis and a later role in interstitial connective tissue. This Mus musculus (Mouse) protein is EMILIN-1 (Emilin1).